Reading from the N-terminus, the 92-residue chain is Small ribosomal subunit protein uS19 (92 aa).

This sequence belongs to the universal ribosomal protein uS19 family.

In terms of biological role, protein S19 forms a complex with S13 that binds strongly to the 16S ribosomal RNA. The chain is Small ribosomal subunit protein uS19 from Staphylococcus aureus (strain Mu3 / ATCC 700698).